We begin with the raw amino-acid sequence, 122 residues long: Small ribosomal subunit protein uS13 (122 aa).

Residues 95-122 (GLPVRGQRTHTNARTRKGPAKSIAGKKK) form a disordered region.

It belongs to the universal ribosomal protein uS13 family. As to quaternary structure, part of the 30S ribosomal subunit. Forms a loose heterodimer with protein S19. Forms two bridges to the 50S subunit in the 70S ribosome.

Functionally, located at the top of the head of the 30S subunit, it contacts several helices of the 16S rRNA. In the 70S ribosome it contacts the 23S rRNA (bridge B1a) and protein L5 of the 50S subunit (bridge B1b), connecting the 2 subunits; these bridges are implicated in subunit movement. Contacts the tRNAs in the A and P-sites. This chain is Small ribosomal subunit protein uS13, found in Rhodopseudomonas palustris (strain BisB18).